The sequence spans 327 residues: DNA-directed RNA polymerase subunit alpha (327 aa).

The alpha N-terminal domain (alpha-NTD) stretch occupies residues 1 to 233 (MQNSASEFLK…DQLSIFADLQ (233 aa)). The alpha C-terminal domain (alpha-CTD) stretch occupies residues 247–327 (VDPILLRPVD…NWPPAGLEKP (81 aa)).

Belongs to the RNA polymerase alpha chain family. In terms of assembly, homodimer. The RNAP catalytic core consists of 2 alpha, 1 beta, 1 beta' and 1 omega subunit. When a sigma factor is associated with the core the holoenzyme is formed, which can initiate transcription.

The enzyme catalyses RNA(n) + a ribonucleoside 5'-triphosphate = RNA(n+1) + diphosphate. DNA-dependent RNA polymerase catalyzes the transcription of DNA into RNA using the four ribonucleoside triphosphates as substrates. This Laribacter hongkongensis (strain HLHK9) protein is DNA-directed RNA polymerase subunit alpha.